The sequence spans 341 residues: Two-component response regulator EHD1 (341 aa).

The Response regulatory domain occupies 12–127; sequence RVLVIDDDCS…ELSNIWQHIF (116 aa). D63 is subject to 4-aspartylphosphate. In terms of domain architecture, HTH myb-type spans 195–254; the sequence is DLGKSRLTWTTQLHRQFIAAVNHLGEDKAVPKKILGIMKVKHLTREQVASHLQKYRMQLK. The H-T-H motif DNA-binding region spans 225–250; sequence PKKILGIMKVKHLTREQVASHLQKYR.

Two-component system major event consists of a His-to-Asp phosphorelay between a sensor histidine kinase (HK) and a response regulator (RR). In plants, the His-to-Asp phosphorelay involves an additional intermediate named Histidine-containing phosphotransfer protein (HPt). This multistep phosphorelay consists of a His-Asp-His-Asp sequential transfer of a phosphate group between first a His and an Asp of the HK protein, followed by the transfer to a conserved His of the HPt protein and finally the transfer to an Asp in the receiver domain of the RR protein.

Its subcellular location is the nucleus. Functionally, transcriptional activator that acts as a floral inducer to promote short-day (SD) flowering pathway. Activates Hd3a and other FT-like genes independently from Hd1. May also activate MADS-box transcription factors involved in flowering regulation. This chain is Two-component response regulator EHD1 (EHD1), found in Oryza sativa subsp. indica (Rice).